Here is a 590-residue protein sequence, read N- to C-terminus: Muscarinic acetylcholine receptor M3 (590 aa).

Residues 1 to 67 (MTLHSNSTTS…DPLGGHTVWQ (67 aa)) lie on the Extracellular side of the membrane. 4 N-linked (GlcNAc...) asparagine glycosylation sites follow: N6, N15, N41, and N48. A helical membrane pass occupies residues 68–91 (VVFIAFLTGILALVTIIGNILVIV). The Cytoplasmic segment spans residues 92–104 (SFKVNKQLKTVNN). Residues 105-130 (YFLLSLACADLIIGVISMNLFTTYII) traverse the membrane as a helical segment. The Extracellular segment spans residues 131–142 (MNRWALGNLACD). C141 and C221 are joined by a disulfide. The chain crosses the membrane as a helical span at residues 143-164 (LWLAIDYVASNASVMNLLVISF). Residues 165–184 (DRYFSITRPLTYRAKRTTKR) lie on the Cytoplasmic side of the membrane. A helical membrane pass occupies residues 185–206 (AGVMIGLAWVISFVLWAPAILF). The Extracellular segment spans residues 207–229 (WQYFVGKRTVPPGECFIQFLSEP). A helical transmembrane segment spans residues 230–252 (TITFGTAIAAFYMPVTIMTILYW). At 253–491 (RIYKETEKRT…SLVKEKKAAQ (239 aa)) the chain is on the cytoplasmic side. A Basolateral sorting signal motif is present at residues 275-281 (AETENFV). The tract at residues 323-357 (SSEQMDQDHSSSDSWNNNDAAASLENSASSDEEDI) is disordered. Residues 334-345 (SDSWNNNDAAAS) show a composition bias toward low complexity. S385 carries the phosphoserine modification. The chain crosses the membrane as a helical span at residues 492–514 (TLSAILLAFIITWTPYNIMVLVN). Residues 515-526 (TFCDSCIPKTFW) lie on the Extracellular side of the membrane. C517 and C520 are joined by a disulfide. A helical membrane pass occupies residues 527–546 (NLGYWLCYINSTVNPVCYAL). The Cytoplasmic segment spans residues 547–590 (CNKTFRTTFKMLLLCQCDKKKRRKQQYQQRQSVIFHKRAPEQAL).

It belongs to the G-protein coupled receptor 1 family. Muscarinic acetylcholine receptor subfamily. CHRM3 sub-subfamily. As to quaternary structure, homodimer; the dimers can form tetramers. Interacts with NALCN. Interacts with TMEM147.

It is found in the cell membrane. The protein resides in the postsynaptic cell membrane. The protein localises to the basolateral cell membrane. Its subcellular location is the endoplasmic reticulum membrane. Its function is as follows. The muscarinic acetylcholine receptor mediates various cellular responses, including inhibition of adenylate cyclase, breakdown of phosphoinositides and modulation of potassium channels through the action of G proteins. Primary transducing effect is Pi turnover. In Pongo pygmaeus (Bornean orangutan), this protein is Muscarinic acetylcholine receptor M3 (CHRM3).